Here is a 412-residue protein sequence, read N- to C-terminus: Probable tRNA sulfurtransferase (412 aa).

Residues 1–22 (MPDIFTDNTDKQDSDPSRQGFE) form a disordered region. One can recognise a THUMP domain in the interval 82–190 (PRAAEAAADV…QNLAYVYLET (109 aa)). Residues 208 to 209 (LM), Lys292, Gly314, and Gln323 contribute to the ATP site.

This sequence belongs to the ThiI family.

It is found in the cytoplasm. The catalysed reaction is [ThiI sulfur-carrier protein]-S-sulfanyl-L-cysteine + a uridine in tRNA + 2 reduced [2Fe-2S]-[ferredoxin] + ATP + H(+) = [ThiI sulfur-carrier protein]-L-cysteine + a 4-thiouridine in tRNA + 2 oxidized [2Fe-2S]-[ferredoxin] + AMP + diphosphate. It carries out the reaction [ThiS sulfur-carrier protein]-C-terminal Gly-Gly-AMP + S-sulfanyl-L-cysteinyl-[cysteine desulfurase] + AH2 = [ThiS sulfur-carrier protein]-C-terminal-Gly-aminoethanethioate + L-cysteinyl-[cysteine desulfurase] + A + AMP + 2 H(+). The protein operates within cofactor biosynthesis; thiamine diphosphate biosynthesis. Catalyzes the ATP-dependent transfer of a sulfur to tRNA to produce 4-thiouridine in position 8 of tRNAs, which functions as a near-UV photosensor. Also catalyzes the transfer of sulfur to the sulfur carrier protein ThiS, forming ThiS-thiocarboxylate. This is a step in the synthesis of thiazole, in the thiamine biosynthesis pathway. The sulfur is donated as persulfide by IscS. The polypeptide is Probable tRNA sulfurtransferase (Methanosarcina acetivorans (strain ATCC 35395 / DSM 2834 / JCM 12185 / C2A)).